We begin with the raw amino-acid sequence, 223 residues long: uncharacterized protein (223 aa).

The transit peptide at 1–12 (MFRSLVRKTTPL) directs the protein to the mitochondrion.

The protein resides in the mitochondrion. This is an uncharacterized protein from Candida albicans (strain WO-1) (Yeast).